A 339-amino-acid polypeptide reads, in one-letter code: Glycerol-3-phosphate dehydrogenase [NAD(P)+] (339 aa).

Positions 13, 14, and 108 each coordinate NADPH. The sn-glycerol 3-phosphate site is built by lysine 108, glycine 139, and serine 141. Alanine 143 is a binding site for NADPH. Lysine 194, aspartate 247, serine 257, arginine 258, and asparagine 259 together coordinate sn-glycerol 3-phosphate. Residue lysine 194 is the Proton acceptor of the active site. Arginine 258 contributes to the NADPH binding site. 2 residues coordinate NADPH: valine 282 and glutamate 284.

The protein belongs to the NAD-dependent glycerol-3-phosphate dehydrogenase family.

The protein resides in the cytoplasm. It catalyses the reaction sn-glycerol 3-phosphate + NAD(+) = dihydroxyacetone phosphate + NADH + H(+). The enzyme catalyses sn-glycerol 3-phosphate + NADP(+) = dihydroxyacetone phosphate + NADPH + H(+). It functions in the pathway membrane lipid metabolism; glycerophospholipid metabolism. Catalyzes the reduction of the glycolytic intermediate dihydroxyacetone phosphate (DHAP) to sn-glycerol 3-phosphate (G3P), the key precursor for phospholipid synthesis. The polypeptide is Glycerol-3-phosphate dehydrogenase [NAD(P)+] (Streptococcus equi subsp. zooepidemicus (strain H70)).